A 511-amino-acid chain; its full sequence is 2,3-bisphosphoglycerate-independent phosphoglycerate mutase (511 aa).

Aspartate 12 serves as a coordination point for Mn(2+). A Phosphotyrosine modification is found at tyrosine 36. Serine 62 contacts Mn(2+). The Phosphoserine intermediate role is filled by serine 62. Substrate-binding positions include histidine 123, 153–154 (RD), arginine 185, arginine 191, 261–264 (RPDR), and lysine 336. 5 residues coordinate Mn(2+): aspartate 403, histidine 407, aspartate 444, histidine 445, and histidine 462.

It belongs to the BPG-independent phosphoglycerate mutase family. As to quaternary structure, monomer. Mn(2+) serves as cofactor.

The catalysed reaction is (2R)-2-phosphoglycerate = (2R)-3-phosphoglycerate. The protein operates within carbohydrate degradation; glycolysis; pyruvate from D-glyceraldehyde 3-phosphate: step 3/5. Its function is as follows. Catalyzes the interconversion of 2-phosphoglycerate and 3-phosphoglycerate. This is 2,3-bisphosphoglycerate-independent phosphoglycerate mutase from Geobacillus kaustophilus (strain HTA426).